The chain runs to 79 residues: MORN repeat-containing protein 2 (79 aa).

2 MORN repeats span residues 15 to 36 and 38 to 55; these read YEGQFKDNMFHGLGTYTFPNGA and YTGNFNENRVEGEGEYTD.

It localises to the cytoplasmic vesicle. The protein resides in the secretory vesicle. It is found in the acrosome. Its subcellular location is the nucleus. Its function is as follows. Might have a role in spermatogenesis. The protein is MORN repeat-containing protein 2 of Homo sapiens (Human).